The primary structure comprises 950 residues: Coatomer subunit beta-2 (950 aa).

HEAT repeat units lie at residues 92–126, 127–164, 275–312, 313–350, and 392–429; these read PEMI…LSEP, EVLE…LPHG, TAVR…TSHR, DVMV…ARNV, and EVAG…TNPK.

In terms of assembly, oligomeric complex that consists of at least the alpha, beta, beta', gamma, delta, epsilon and zeta subunits.

It is found in the cytoplasm. Its subcellular location is the golgi apparatus membrane. The protein localises to the cytoplasmic vesicle. The protein resides in the COPI-coated vesicle membrane. Functionally, the coatomer is a cytosolic protein complex that binds to dilysine motifs and reversibly associates with Golgi non-clathrin-coated vesicles, which further mediate biosynthetic protein transport from the ER, via the Golgi up to the trans Golgi network. Coatomer complex is required for budding from Golgi membranes, and is essential for the retrograde Golgi-to-ER transport of dilysine-tagged proteins. This chain is Coatomer subunit beta-2, found in Oryza sativa subsp. japonica (Rice).